The sequence spans 70 residues: Kappa-scoloptoxin(07)-Ssm2b (70 aa).

The signal sequence occupies residues M1–G19. Positions A20–R39 are excised as a propeptide.

It belongs to the scoloptoxin-07 family. In terms of processing, contains 3 disulfide bonds. As to expression, expressed by the venom gland.

It is found in the secreted. Functionally, inhibits voltage-gated potassium channels. The sequence is that of Kappa-scoloptoxin(07)-Ssm2b from Scolopendra mutilans (Chinese red-headed centipede).